A 104-amino-acid chain; its full sequence is Late embryogenis abundant protein 41 (104 aa).

A mitochondrion-targeting transit peptide spans 1–31 (MAARSLSGAVKSLCSAASGSLSCSIVLRRSY).

Belongs to the LEA type 3 family.

It localises to the mitochondrion. The sequence is that of Late embryogenis abundant protein 41 from Arabidopsis thaliana (Mouse-ear cress).